Reading from the N-terminus, the 380-residue chain is Homoserine O-acetyltransferase (380 aa).

An AB hydrolase-1 domain is found at 70–366; sequence NAVLVFHALT…SPHGHDAFLI (297 aa). The Nucleophile role is filled by S186. R250 serves as a coordination point for substrate. Catalysis depends on residues D333 and H361. Residue D362 participates in substrate binding.

Belongs to the AB hydrolase superfamily. MetX family. Homodimer.

The protein localises to the cytoplasm. The catalysed reaction is L-homoserine + acetyl-CoA = O-acetyl-L-homoserine + CoA. It participates in amino-acid biosynthesis; L-methionine biosynthesis via de novo pathway; O-acetyl-L-homoserine from L-homoserine: step 1/1. Functionally, transfers an acetyl group from acetyl-CoA to L-homoserine, forming acetyl-L-homoserine. This Thermus thermophilus (strain ATCC BAA-163 / DSM 7039 / HB27) protein is Homoserine O-acetyltransferase.